A 345-amino-acid chain; its full sequence is Histidinol-phosphate aminotransferase (345 aa).

Lysine 206 is subject to N6-(pyridoxal phosphate)lysine.

This sequence belongs to the class-II pyridoxal-phosphate-dependent aminotransferase family. Histidinol-phosphate aminotransferase subfamily. As to quaternary structure, homodimer. Requires pyridoxal 5'-phosphate as cofactor.

The enzyme catalyses L-histidinol phosphate + 2-oxoglutarate = 3-(imidazol-4-yl)-2-oxopropyl phosphate + L-glutamate. Its pathway is amino-acid biosynthesis; L-histidine biosynthesis; L-histidine from 5-phospho-alpha-D-ribose 1-diphosphate: step 7/9. The sequence is that of Histidinol-phosphate aminotransferase from Bacteroides fragilis (strain ATCC 25285 / DSM 2151 / CCUG 4856 / JCM 11019 / LMG 10263 / NCTC 9343 / Onslow / VPI 2553 / EN-2).